The following is a 416-amino-acid chain: Phosphoribosylamine--glycine ligase (416 aa).

An ATP-grasp domain is found at 107-303; that stretch reads KDVMACAGVP…LAGLLMAAAT (197 aa). 133 to 184 serves as a coordination point for ATP; sequence LAAFGAPYVVKDDGLAAGKGVVVTDDVEAARAHANACDRVVVEEFLDGPEVS. 2 residues coordinate Mg(2+): E273 and N275.

The protein belongs to the GARS family. It depends on Mg(2+) as a cofactor. Requires Mn(2+) as cofactor.

It carries out the reaction 5-phospho-beta-D-ribosylamine + glycine + ATP = N(1)-(5-phospho-beta-D-ribosyl)glycinamide + ADP + phosphate + H(+). Its pathway is purine metabolism; IMP biosynthesis via de novo pathway; N(1)-(5-phospho-D-ribosyl)glycinamide from 5-phospho-alpha-D-ribose 1-diphosphate: step 2/2. This Streptomyces coelicolor (strain ATCC BAA-471 / A3(2) / M145) protein is Phosphoribosylamine--glycine ligase.